The chain runs to 109 residues: Movement protein TGB2 (109 aa).

Residues 1–9 (MPLTPPPDF) lie on the Cytoplasmic side of the membrane. A helical membrane pass occupies residues 10–30 (TKVYLSAALGVSLALVVWLLI). Over 31–72 (RSTLPVVGDRDHNLPHGGWYRDGTKSVFYNSPGRLNSIEARK) the chain is Lumenal. Residues 73-93 (APLLGQPWAIVVLLVLLIWAS) traverse the membrane as a helical segment. Over 94-109 (HKLGRPNCRACAGSHT) the chain is Cytoplasmic.

The protein belongs to the Tymovirales TGBp2 protein family.

It localises to the host endoplasmic reticulum membrane. Its function is as follows. Plays a role in viral cell-to-cell propagation, by facilitating genome transport to neighboring plant cells through plasmosdesmata,. The chain is Movement protein TGB2 from Solanum tuberosum (Potato).